Reading from the N-terminus, the 152-residue chain is 3-hydroxyacyl-[acyl-carrier-protein] dehydratase FabZ (152 aa).

The active site involves H57.

The protein belongs to the thioester dehydratase family. FabZ subfamily.

It localises to the cytoplasm. The catalysed reaction is a (3R)-hydroxyacyl-[ACP] = a (2E)-enoyl-[ACP] + H2O. Functionally, involved in unsaturated fatty acids biosynthesis. Catalyzes the dehydration of short chain beta-hydroxyacyl-ACPs and long chain saturated and unsaturated beta-hydroxyacyl-ACPs. The protein is 3-hydroxyacyl-[acyl-carrier-protein] dehydratase FabZ of Xanthomonas axonopodis pv. citri (strain 306).